Reading from the N-terminus, the 106-residue chain is Toxin-like structure LSTX-D4 (106 aa).

The N-terminal stretch at 1-20 (MMKVLVVVALLVTLISYSSS) is a signal peptide. The propeptide occupies 21–41 (EGIGDLEADELLSLMANEQTR). Intrachain disulfides connect Cys45/Cys60, Cys52/Cys69, Cys59/Cys85, and Cys71/Cys83.

The protein belongs to the neurotoxin 19 (CSTX) family. 02 (D7) subfamily. Expressed by the venom gland.

It is found in the secreted. The polypeptide is Toxin-like structure LSTX-D4 (Lycosa singoriensis (Wolf spider)).